The primary structure comprises 315 residues: Ribosomal RNA large subunit methyltransferase F (315 aa).

This sequence belongs to the methyltransferase superfamily. METTL16/RlmF family.

The protein localises to the cytoplasm. The catalysed reaction is adenosine(1618) in 23S rRNA + S-adenosyl-L-methionine = N(6)-methyladenosine(1618) in 23S rRNA + S-adenosyl-L-homocysteine + H(+). Functionally, specifically methylates the adenine in position 1618 of 23S rRNA. This Aeromonas salmonicida (strain A449) protein is Ribosomal RNA large subunit methyltransferase F.